Reading from the N-terminus, the 1275-residue chain is ATP-dependent helicase/nuclease subunit A (1275 aa).

Positions 4–481 (PKWTKEQLEV…IMLYKNFRSR (478 aa)) constitute a UvrD-like helicase ATP-binding domain. Residue 25–32 (AAAGSGKT) participates in ATP binding. Residues 531 to 839 (TEIHLIQKDN…RIMSIHKSKG (309 aa)) form the UvrD-like helicase C-terminal domain.

Belongs to the helicase family. AddA subfamily. As to quaternary structure, heterodimer of AddA and AddB/RexB. Requires Mg(2+) as cofactor.

The catalysed reaction is Couples ATP hydrolysis with the unwinding of duplex DNA by translocating in the 3'-5' direction.. It carries out the reaction ATP + H2O = ADP + phosphate + H(+). The heterodimer acts as both an ATP-dependent DNA helicase and an ATP-dependent, dual-direction single-stranded exonuclease. Recognizes the chi site generating a DNA molecule suitable for the initiation of homologous recombination. The AddA nuclease domain is required for chi fragment generation; this subunit has the helicase and 3' -&gt; 5' nuclease activities. In Clostridioides difficile (strain 630) (Peptoclostridium difficile), this protein is ATP-dependent helicase/nuclease subunit A.